Reading from the N-terminus, the 111-residue chain is Cytochrome b-c1 complex subunit 7 (111 aa).

A2 bears the N-acetylalanine mark. At K12 the chain carries N6-acetyllysine; alternate. K12 carries the N6-succinyllysine; alternate modification. K19 bears the N6-acetyllysine mark. An N6-acetyllysine; alternate modification is found at K78. An N6-succinyllysine; alternate modification is found at K78. N6-acetyllysine is present on residues K83 and K96.

The protein belongs to the UQCRB/QCR7 family. As to quaternary structure, component of the ubiquinol-cytochrome c oxidoreductase (cytochrome b-c1 complex, complex III, CIII), a multisubunit enzyme composed of 11 subunits. The complex is composed of 3 respiratory subunits cytochrome b, cytochrome c1 and Rieske protein UQCRFS1, 2 core protein subunits UQCRC1/QCR1 and UQCRC2/QCR2, and 6 low-molecular weight protein subunits UQCRH/QCR6, UQCRB/QCR7, UQCRQ/QCR8, UQCR10/QCR9, UQCR11/QCR10 and subunit 9, the cleavage product of Rieske protein UQCRFS1. The complex exists as an obligatory dimer and forms supercomplexes (SCs) in the inner mitochondrial membrane with NADH-ubiquinone oxidoreductase (complex I, CI) and cytochrome c oxidase (complex IV, CIV), resulting in different assemblies (supercomplex SCI(1)III(2)IV(1) and megacomplex MCI(2)III(2)IV(2)).

It localises to the mitochondrion inner membrane. Its function is as follows. Component of the ubiquinol-cytochrome c oxidoreductase, a multisubunit transmembrane complex that is part of the mitochondrial electron transport chain which drives oxidative phosphorylation. The respiratory chain contains 3 multisubunit complexes succinate dehydrogenase (complex II, CII), ubiquinol-cytochrome c oxidoreductase (cytochrome b-c1 complex, complex III, CIII) and cytochrome c oxidase (complex IV, CIV), that cooperate to transfer electrons derived from NADH and succinate to molecular oxygen, creating an electrochemical gradient over the inner membrane that drives transmembrane transport and the ATP synthase. The cytochrome b-c1 complex catalyzes electron transfer from ubiquinol to cytochrome c, linking this redox reaction to translocation of protons across the mitochondrial inner membrane, with protons being carried across the membrane as hydrogens on the quinol. In the process called Q cycle, 2 protons are consumed from the matrix, 4 protons are released into the intermembrane space and 2 electrons are passed to cytochrome c. The polypeptide is Cytochrome b-c1 complex subunit 7 (UQCRB) (Homo sapiens (Human)).